The chain runs to 117 residues: Immunoglobulin heavy variable 1-58 (117 aa).

Positions 1-19 are cleaved as a signal peptide; that stretch reads MDWIWRILFLVGAATGAHS. Residues 20 to 44 form a framework-1 region; that stretch reads QMQLVQSGPEVKKPGTSVKVSCKAS. Residues 20–117 form the Ig-like domain; sequence QMQLVQSGPE…EDTAVYYCAA (98 aa). Cys41 and Cys115 form a disulfide bridge. The complementarity-determining-1 stretch occupies residues 45-52; the sequence is GFTFTSSA. A framework-2 region spans residues 53–69; that stretch reads VQWVRQARGQRLEWIGW. Residues 70–77 are complementarity-determining-2; sequence IVVGSGNT. Positions 78–115 are framework-3; sequence NYAQKFQERVTITRDMSTSTAYMELSSLRSEDTAVYYC. Residues 116-117 are complementarity-determining-3; sequence AA.

Immunoglobulins are composed of two identical heavy chains and two identical light chains; disulfide-linked.

It localises to the secreted. Its subcellular location is the cell membrane. In terms of biological role, v region of the variable domain of immunoglobulin heavy chains that participates in the antigen recognition. Immunoglobulins, also known as antibodies, are membrane-bound or secreted glycoproteins produced by B lymphocytes. In the recognition phase of humoral immunity, the membrane-bound immunoglobulins serve as receptors which, upon binding of a specific antigen, trigger the clonal expansion and differentiation of B lymphocytes into immunoglobulins-secreting plasma cells. Secreted immunoglobulins mediate the effector phase of humoral immunity, which results in the elimination of bound antigens. The antigen binding site is formed by the variable domain of one heavy chain, together with that of its associated light chain. Thus, each immunoglobulin has two antigen binding sites with remarkable affinity for a particular antigen. The variable domains are assembled by a process called V-(D)-J rearrangement and can then be subjected to somatic hypermutations which, after exposure to antigen and selection, allow affinity maturation for a particular antigen. The sequence is that of Immunoglobulin heavy variable 1-58 from Homo sapiens (Human).